The primary structure comprises 354 residues: Neutral protease 2 homolog MEP3 (354 aa).

The N-terminal stretch at 1 to 19 is a signal peptide; sequence MHFTSSLLALVALTTQALA. The propeptide occupies 20–179; that stretch reads FPLNDLPKRD…QSAIPKLEKR (160 aa). 2 cysteine pairs are disulfide-bonded: Cys186/Cys256 and Cys263/Cys281. His305 lines the Zn(2+) pocket. Glu306 is an active-site residue. Zn(2+) contacts are provided by His309 and Asp320.

This sequence belongs to the peptidase M35 family. Requires Zn(2+) as cofactor.

Its subcellular location is the secreted. The catalysed reaction is Preferential cleavage of bonds with hydrophobic residues in P1'. Also 3-Asn-|-Gln-4 and 8-Gly-|-Ser-9 bonds in insulin B chain.. Its function is as follows. Secreted metalloproteinase that allows assimilation of proteinaceous substrates. Shows high activities on basic nuclear substrates such as histone and protamine. May be involved in virulence. The protein is Neutral protease 2 homolog MEP3 (MEP3) of Coccidioides posadasii (strain C735) (Valley fever fungus).